Here is a 217-residue protein sequence, read N- to C-terminus: Ras-related protein RABA2d (217 aa).

19 to 26 (GDSGVGKT) is a binding site for GTP. The Effector region motif lies at 41-49 (SKSTIGVEF). Residues 67–71 (DTAGQ), 125–128 (NKAD), and 155–156 (SA) each bind GTP. The disordered stretch occupies residues 196–217 (GQGTTINVEDTSGAGKRGCCST). S-geranylgeranyl cysteine attachment occurs at residues Cys-214 and Cys-215.

It belongs to the small GTPase superfamily. Rab family. Expressed in root tips.

The protein resides in the endosome membrane. Its subcellular location is the golgi apparatus. It localises to the trans-Golgi network membrane. In terms of biological role, intracellular vesicle trafficking and protein transport. This chain is Ras-related protein RABA2d (RABA2D), found in Arabidopsis thaliana (Mouse-ear cress).